Reading from the N-terminus, the 437-residue chain is Ribulose bisphosphate carboxylase-like protein (437 aa).

Catalysis depends on lysine 176, which acts as the Proton acceptor. Positions 202, 204, and 205 each coordinate Mg(2+). At lysine 202 the chain carries N6-carboxylysine. The active-site Proton acceptor is the histidine 293.

It belongs to the RuBisCO large chain family. Type IV subfamily. Homodimer. The cofactor is Mg(2+).

Its function is as follows. May be involved in sulfur metabolism and oxidative stress response. Does not show RuBisCO activity. The protein is Ribulose bisphosphate carboxylase-like protein of Archaeoglobus fulgidus (strain ATCC 49558 / DSM 4304 / JCM 9628 / NBRC 100126 / VC-16).